The following is a 1341-amino-acid chain: DNA-directed RNA polymerase subunit beta (1341 aa).

Belongs to the RNA polymerase beta chain family. The RNAP catalytic core consists of 2 alpha, 1 beta, 1 beta' and 1 omega subunit. When a sigma factor is associated with the core the holoenzyme is formed, which can initiate transcription.

The enzyme catalyses RNA(n) + a ribonucleoside 5'-triphosphate = RNA(n+1) + diphosphate. Its function is as follows. DNA-dependent RNA polymerase catalyzes the transcription of DNA into RNA using the four ribonucleoside triphosphates as substrates. This Pseudoalteromonas translucida (strain TAC 125) protein is DNA-directed RNA polymerase subunit beta.